The following is a 209-amino-acid chain: Ribosomal RNA large subunit methyltransferase E (209 aa).

Positions 63, 65, 83, 99, and 124 each coordinate S-adenosyl-L-methionine. K164 functions as the Proton acceptor in the catalytic mechanism. Residues E191–G209 form the TRAM domain.

This sequence belongs to the class I-like SAM-binding methyltransferase superfamily. RNA methyltransferase RlmE family.

It is found in the cytoplasm. The enzyme catalyses uridine(2552) in 23S rRNA + S-adenosyl-L-methionine = 2'-O-methyluridine(2552) in 23S rRNA + S-adenosyl-L-homocysteine + H(+). Specifically methylates the uridine in position 2552 of 23S rRNA at the 2'-O position of the ribose in the fully assembled 50S ribosomal subunit. The protein is Ribosomal RNA large subunit methyltransferase E of Haemophilus influenzae (strain ATCC 51907 / DSM 11121 / KW20 / Rd).